Consider the following 364-residue polypeptide: Selection and upkeep of intraepithelial T-cells protein 11 (364 aa).

The signal sequence occupies residues 1–28 (MEPSASCLPGFFMVCILLKITVLTQVMS). In terms of domain architecture, Ig-like V-type spans 29–118 (LDIQINTQIP…TNQEKRRSII (90 aa)). Residues 29–138 (LDIQINTQIP…MSLMSNNLLY (110 aa)) lie on the Extracellular side of the membrane. A disulfide bond links cysteine 48 and cysteine 102. Residues 139–159 (LGIYLIFILFLNFLKGILFCL) traverse the membrane as a helical segment. The Cytoplasmic segment spans residues 160–186 (TKRLVHFRKRMIKIKKVWSNKTRACCP). The helical transmembrane segment at 187-207 (LIWEFLEIVLFIAFLPLYLMF) threads the bilayer. Over 208 to 230 (RIRVFTLDEAHILYNNWLWKVCK) the chain is Extracellular. Residues 231-251 (TLIAMMILFTVLILFLLWTLN) traverse the membrane as a helical segment. The Cytoplasmic segment spans residues 252–364 (RYGKMPCLSS…LYSKLGNLTH (113 aa)).

This sequence belongs to the SKINT family. In terms of tissue distribution, expressed in skin and thymus.

Its subcellular location is the membrane. Functionally, may act by engaging a cell surface molecule on immature T-cells in the embryonic thymus. The sequence is that of Selection and upkeep of intraepithelial T-cells protein 11 (Skint11) from Mus musculus (Mouse).